Here is a 315-residue protein sequence, read N- to C-terminus: Cytochrome c biogenesis protein CcsA (315 aa).

A run of 8 helical transmembrane segments spans residues 15 to 35, 39 to 59, 73 to 93, 97 to 117, 144 to 164, 222 to 242, 257 to 277, and 283 to 303; these read SCFL…GFGG, FSFT…LQLI, LYES…YIEV, TLFL…FTDF, VMIA…AYLV, TIGI…IWAN, WAFI…VGGW, and ALVA…VNLL.

It belongs to the CcmF/CycK/Ccl1/NrfE/CcsA family. In terms of assembly, may interact with Ccs1.

It localises to the plastid. The protein localises to the chloroplast thylakoid membrane. Functionally, required during biogenesis of c-type cytochromes (cytochrome c6 and cytochrome f) at the step of heme attachment. The sequence is that of Cytochrome c biogenesis protein CcsA from Chlorella vulgaris (Green alga).